A 631-amino-acid polypeptide reads, in one-letter code: ESX-3 secretion system protein EccA3 (631 aa).

Residue 385-392 coordinates ATP; sequence GPPGTGKT.

The protein belongs to the CbxX/CfxQ family. As to quaternary structure, part of the ESX-3 / type VII secretion system (T7SS), which is composed of cytosolic and membrane components.

It is found in the cytoplasm. In terms of biological role, part of the ESX-3 specialized secretion system, which is important for iron and zinc uptake or homeostasis. EccA3 exhibits ATPase activity and may provide energy for the export of ESX-3 substrates. In Mycobacterium tuberculosis (strain CDC 1551 / Oshkosh), this protein is ESX-3 secretion system protein EccA3.